Reading from the N-terminus, the 335-residue chain is uncharacterized protein (335 aa).

28-35 (GPINSGKT) contributes to the ATP binding site.

The protein belongs to the archaeal ATPase family.

This is an uncharacterized protein from Pyrococcus abyssi (strain GE5 / Orsay).